Here is a 450-residue protein sequence, read N- to C-terminus: GTPase HflX (450 aa).

2 disordered regions span residues 79 to 110 (TSMAPPPKSKARQRFEGAAEGAAPPEPDPDAA) and 173 to 196 (RLRESSGGGGRQQGPGAGESTLAL). The span at 178-189 (SGGGGRQQGPGA) shows a compositional bias: gly residues. In terms of domain architecture, Hflx-type G spans 230–395 (LRVALVGYTN…TLIAFFEAEM (166 aa)). GTP is bound by residues 236–243 (GYTNAGKS), 261–265 (FATLD), 283–286 (DTVG), 349–352 (NKMD), and 373–375 (SAH). 2 residues coordinate Mg(2+): S243 and T263.

This sequence belongs to the TRAFAC class OBG-HflX-like GTPase superfamily. HflX GTPase family. Monomer. Associates with the 50S ribosomal subunit. Requires Mg(2+) as cofactor.

Its subcellular location is the cytoplasm. In terms of biological role, GTPase that associates with the 50S ribosomal subunit and may have a role during protein synthesis or ribosome biogenesis. The chain is GTPase HflX from Gluconacetobacter diazotrophicus (strain ATCC 49037 / DSM 5601 / CCUG 37298 / CIP 103539 / LMG 7603 / PAl5).